We begin with the raw amino-acid sequence, 172 residues long: Ribosome maturation factor RimM (172 aa).

The PRC barrel domain maps to 97 to 170; it reads DDEYYYDEII…LITIDVLEGL (74 aa).

The protein belongs to the RimM family. In terms of assembly, binds ribosomal protein uS19.

The protein resides in the cytoplasm. Functionally, an accessory protein needed during the final step in the assembly of 30S ribosomal subunit, possibly for assembly of the head region. Essential for efficient processing of 16S rRNA. May be needed both before and after RbfA during the maturation of 16S rRNA. It has affinity for free ribosomal 30S subunits but not for 70S ribosomes. In Leuconostoc citreum (strain KM20), this protein is Ribosome maturation factor RimM.